The sequence spans 398 residues: Cysteine protease ATG4A (398 aa).

The active-site Nucleophile is C77. Active-site residues include D279 and H281. Positions 393–396 match the LIR motif; sequence FEIL.

This sequence belongs to the peptidase C54 family. In terms of assembly, interacts with ATG9A; the interaction is direct.

The protein resides in the cytoplasm. It carries out the reaction [protein]-C-terminal L-amino acid-glycyl-phosphatidylethanolamide + H2O = [protein]-C-terminal L-amino acid-glycine + a 1,2-diacyl-sn-glycero-3-phosphoethanolamine. Its activity is regulated as follows. Inhibited by N-ethylmaleimide. Redox-regulated during autophagy since reducing conditions activate ATG4A whereas an oxidizing environment such as the presence of H(2)O(2) inhibits its activity. Functionally, cysteine protease that plays a key role in autophagy by mediating both proteolytic activation and delipidation of ATG8 family proteins. The protease activity is required for proteolytic activation of ATG8 family proteins: cleaves the C-terminal amino acid of ATG8 proteins to reveal a C-terminal glycine. Exposure of the glycine at the C-terminus is essential for ATG8 proteins conjugation to phosphatidylethanolamine (PE) and insertion to membranes, which is necessary for autophagy. Preferred substrate is GABARAPL2 followed by MAP1LC3A and GABARAP. Protease activity is also required to counteract formation of high-molecular weight conjugates of ATG8 proteins (ATG8ylation): acts as a deubiquitinating-like enzyme that removes ATG8 conjugated to other proteins, such as ATG3. In addition to the protease activity, also mediates delipidation of ATG8 family proteins. Catalyzes delipidation of PE-conjugated forms of ATG8 proteins during macroautophagy. Compared to ATG4B, the major protein for proteolytic activation of ATG8 proteins, shows weaker ability to cleave the C-terminal amino acid of ATG8 proteins, while it displays stronger delipidation activity. Involved in phagophore growth during mitophagy independently of its protease activity and of ATG8 proteins: acts by regulating ATG9A trafficking to mitochondria and promoting phagophore-endoplasmic reticulum contacts during the lipid transfer phase of mitophagy. In terms of biological role, (Microbial infection) Mediates cleavage of an ATG8 protein homolog coded in the genome of cytopathogenic bovine viral diarrhea virus (BVDV). This is Cysteine protease ATG4A from Bos taurus (Bovine).